An 859-amino-acid chain; its full sequence is DNA mismatch repair protein MutS (859 aa).

617-624 is a binding site for ATP; it reads GPNMGGKS.

It belongs to the DNA mismatch repair MutS family.

Functionally, this protein is involved in the repair of mismatches in DNA. It is possible that it carries out the mismatch recognition step. This protein has a weak ATPase activity. The polypeptide is DNA mismatch repair protein MutS (Stutzerimonas stutzeri (strain A1501) (Pseudomonas stutzeri)).